Here is a 228-residue protein sequence, read N- to C-terminus: Large ribosomal subunit protein bL25 (228 aa).

Positions 198–228 (AAIAEAQSAEAAEEKAEAEAEATNEKNDTEE) are disordered. The segment covering 209–228 (AEEKAEAEAEATNEKNDTEE) has biased composition (basic and acidic residues).

It belongs to the bacterial ribosomal protein bL25 family. CTC subfamily. As to quaternary structure, part of the 50S ribosomal subunit; part of the 5S rRNA/L5/L18/L25 subcomplex. Contacts the 5S rRNA. Binds to the 5S rRNA independently of L5 and L18.

In terms of biological role, this is one of the proteins that binds to the 5S RNA in the ribosome where it forms part of the central protuberance. This Methylorubrum populi (strain ATCC BAA-705 / NCIMB 13946 / BJ001) (Methylobacterium populi) protein is Large ribosomal subunit protein bL25.